Consider the following 414-residue polypeptide: Esterase FrsA (414 aa).

The protein belongs to the FrsA family.

It catalyses the reaction a carboxylic ester + H2O = an alcohol + a carboxylate + H(+). Catalyzes the hydrolysis of esters. In Escherichia coli O157:H7, this protein is Esterase FrsA.